Consider the following 198-residue polypeptide: A-type ATP synthase subunit E (198 aa).

It belongs to the V-ATPase E subunit family. In terms of assembly, has multiple subunits with at least A(3), B(3), C, D, E, F, H, I and proteolipid K(x).

The protein localises to the cell membrane. Functionally, component of the A-type ATP synthase that produces ATP from ADP in the presence of a proton gradient across the membrane. This is A-type ATP synthase subunit E from Pyrococcus horikoshii (strain ATCC 700860 / DSM 12428 / JCM 9974 / NBRC 100139 / OT-3).